A 188-amino-acid chain; its full sequence is Tumor necrosis factor alpha-induced protein 8-like protein (188 aa).

Belongs to the TNFAIP8 family.

In Drosophila pseudoobscura pseudoobscura (Fruit fly), this protein is Tumor necrosis factor alpha-induced protein 8-like protein.